The following is a 229-amino-acid chain: Potassium/proton antiporter CemA (229 aa).

3 consecutive transmembrane segments (helical) span residues 7-27 (LTPL…SISF), 106-126 (IILH…YSIL), and 189-209 (IISG…KYWI).

This sequence belongs to the CemA family.

Its subcellular location is the plastid. The protein localises to the chloroplast inner membrane. It catalyses the reaction K(+)(in) + H(+)(out) = K(+)(out) + H(+)(in). Its function is as follows. Contributes to K(+)/H(+) antiport activity by supporting proton efflux to control proton extrusion and homeostasis in chloroplasts in a light-dependent manner to modulate photosynthesis. Prevents excessive induction of non-photochemical quenching (NPQ) under continuous-light conditions. Indirectly promotes efficient inorganic carbon uptake into chloroplasts. In Liriodendron tulipifera (Tuliptree), this protein is Potassium/proton antiporter CemA.